A 634-amino-acid chain; its full sequence is Probable potassium transport system protein Kup (634 aa).

The next 12 helical transmembrane spans lie at 21–41 (IILS…LYTL), 61–81 (ILSL…VAVI), 110–130 (IYIV…DGVI), 148–168 (PHMK…LFLC), 180–200 (FGPI…YNIA), 217–237 (FFLE…LAVT), 258–278 (WMYV…ALVL), 296–316 (GLYP…QALI), 348–368 (IYVP…VIGF), 377–397 (AYGV…IIYA), 408–428 (LWMM…ANII), and 432–452 (DGAW…RTWL).

This sequence belongs to the HAK/KUP transporter (TC 2.A.72) family.

The protein resides in the cell inner membrane. It catalyses the reaction K(+)(in) + H(+)(in) = K(+)(out) + H(+)(out). Functionally, transport of potassium into the cell. Likely operates as a K(+):H(+) symporter. The chain is Probable potassium transport system protein Kup from Xylella fastidiosa (strain 9a5c).